The primary structure comprises 547 residues: Serine/threonine-protein kinase pkn3 (547 aa).

The 271-residue stretch at Tyr18 to Val288 folds into the Protein kinase domain. Residues Ile24 to Val32 and Lys47 each bind ATP. Asp142 acts as the Proton acceptor in catalysis. The span at Lys290–Pro299 shows a compositional bias: basic and acidic residues. The interval Lys290 to Ala327 is disordered.

This sequence belongs to the protein kinase superfamily. Ser/Thr protein kinase family.

The enzyme catalyses L-seryl-[protein] + ATP = O-phospho-L-seryl-[protein] + ADP + H(+). It catalyses the reaction L-threonyl-[protein] + ATP = O-phospho-L-threonyl-[protein] + ADP + H(+). The protein is Serine/threonine-protein kinase pkn3 (pkn3) of Myxococcus xanthus.